The following is a 751-amino-acid chain: Polyribonucleotide nucleotidyltransferase (751 aa).

Residues Asp528 and Asp534 each contribute to the Mg(2+) site. The KH domain occupies 594-653; the sequence is PRVISVTVPVSKIGEVIGPKGKMINQIQEDTGTDISIEDDGTVYIGATDGPSAEAARSAI. The region spanning 665-737 is the S1 motif domain; sequence GERYLGTVVK…DRGKLSLAPV (73 aa).

Belongs to the polyribonucleotide nucleotidyltransferase family. It depends on Mg(2+) as a cofactor.

The protein resides in the cytoplasm. The catalysed reaction is RNA(n+1) + phosphate = RNA(n) + a ribonucleoside 5'-diphosphate. In terms of biological role, involved in mRNA degradation. Catalyzes the phosphorolysis of single-stranded polyribonucleotides processively in the 3'- to 5'-direction. The polypeptide is Polyribonucleotide nucleotidyltransferase (Kocuria rhizophila (strain ATCC 9341 / DSM 348 / NBRC 103217 / DC2201)).